The chain runs to 274 residues: Kit ligand (274 aa).

Residues 1–25 (MKKTQTWIITCIYLQLLLFNPLVKT) form the signal peptide. Residues 26–215 (KGICGKRVTD…SNSIGDSNLQ (190 aa)) are Extracellular-facing. Intrachain disulfides connect Cys29–Cys114 and Cys68–Cys164. Asn90, Asn97, Asn145, and Asn196 each carry an N-linked (GlcNAc...) asparagine glycan. A helical membrane pass occupies residues 216–238 (WAAMALPAFFSLVIGFAFGALYW). Residues 239–274 (KKKQPNLTRTVENIQINEEDNEISMLQEKEREFQEV) lie on the Cytoplasmic side of the membrane.

This sequence belongs to the SCF family. As to quaternary structure, homodimer, non-covalently linked. In terms of processing, a soluble form is produced by proteolytic processing of the extracellular domain.

Its subcellular location is the cytoplasm. The protein localises to the cytoskeleton. It is found in the cell membrane. The protein resides in the cell projection. It localises to the lamellipodium. Its subcellular location is the filopodium. The protein localises to the secreted. In terms of biological role, stimulates the proliferation of mast cells. Able to augment the proliferation of both myeloid and lymphoid hematopoietic progenitors in bone marrow culture. Also mediates cell-cell adhesion. Acts synergistically with other cytokines, probably interleukins. This is Kit ligand (KITLG) from Canis lupus familiaris (Dog).